A 334-amino-acid chain; its full sequence is Glycerol-3-phosphate dehydrogenase [NAD(P)+] (334 aa).

NADPH is bound by residues tryptophan 14, arginine 34, and lysine 107. Lysine 107 and glycine 135 together coordinate sn-glycerol 3-phosphate. NADPH is bound at residue alanine 139. Sn-glycerol 3-phosphate-binding residues include lysine 190, aspartate 243, serine 253, arginine 254, and asparagine 255. The Proton acceptor role is filled by lysine 190. Arginine 254 provides a ligand contact to NADPH. NADPH-binding residues include valine 272 and glutamate 273.

It belongs to the NAD-dependent glycerol-3-phosphate dehydrogenase family.

Its subcellular location is the cytoplasm. It carries out the reaction sn-glycerol 3-phosphate + NAD(+) = dihydroxyacetone phosphate + NADH + H(+). The enzyme catalyses sn-glycerol 3-phosphate + NADP(+) = dihydroxyacetone phosphate + NADPH + H(+). Its pathway is membrane lipid metabolism; glycerophospholipid metabolism. Functionally, catalyzes the reduction of the glycolytic intermediate dihydroxyacetone phosphate (DHAP) to sn-glycerol 3-phosphate (G3P), the key precursor for phospholipid synthesis. The chain is Glycerol-3-phosphate dehydrogenase [NAD(P)+] from Neorickettsia sennetsu (strain ATCC VR-367 / Miyayama) (Ehrlichia sennetsu).